The chain runs to 2051 residues: Autophagy-related protein 2 (2051 aa).

Residues 31 to 121 enclose the Chorein N-terminal domain; the sequence is QALDLDNLNF…QDEQTAKNKK (91 aa). Residues 108–117 are compositionally biased toward basic and acidic residues; sequence SKQEQDEQTA. Disordered stretches follow at residues 108–129, 152–179, 297–331, 363–384, 419–466, and 501–564; these read SKQE…DGDE, RRLE…DDDG, SLVK…DMSI, DTQY…TPRA, RSEP…ADTE, and PGGW…DTST. Composition is skewed to polar residues over residues 374–383 and 426–435; these read AGSSPLSTPR and PPTSFQPQTM. A compositionally biased stretch (low complexity) spans 436–454; sequence PSGAVSPAPSEPSSSASSV.

The protein belongs to the ATG2 family.

The protein localises to the preautophagosomal structure membrane. Its subcellular location is the endoplasmic reticulum membrane. The enzyme catalyses a 1,2-diacyl-sn-glycero-3-phosphocholine(in) = a 1,2-diacyl-sn-glycero-3-phosphocholine(out). It carries out the reaction a 1,2-diacyl-sn-glycero-3-phospho-L-serine(in) = a 1,2-diacyl-sn-glycero-3-phospho-L-serine(out). The catalysed reaction is a 1,2-diacyl-sn-glycero-3-phosphoethanolamine(in) = a 1,2-diacyl-sn-glycero-3-phosphoethanolamine(out). Its function is as follows. Lipid transfer protein required for autophagosome completion and peroxisome degradation. Tethers the edge of the isolation membrane (IM) to the endoplasmic reticulum (ER) and mediates direct lipid transfer from ER to IM for IM expansion. Atg-2 binds to the ER exit site (ERES), which is the membrane source for autophagosome formation, using basic residues in its N-terminal region (NR) and to the expanding edge of the IM through its C-terminal region. The latter binding is assisted by an atg-18-PtdIns3P interaction. Atg-2 then extracts phospholipids from the membrane source using its NR and transfers them to atg-9 to the IM through its predicted beta-sheet-rich structure for membrane expansion. The protein is Autophagy-related protein 2 (apg-2) of Neurospora crassa (strain ATCC 24698 / 74-OR23-1A / CBS 708.71 / DSM 1257 / FGSC 987).